We begin with the raw amino-acid sequence, 573 residues long: Adenine deaminase 2 (573 aa).

It belongs to the metallo-dependent hydrolases superfamily. Adenine deaminase family. The cofactor is Mn(2+).

The catalysed reaction is adenine + H2O + H(+) = hypoxanthine + NH4(+). The protein is Adenine deaminase 2 of Shouchella clausii (strain KSM-K16) (Alkalihalobacillus clausii).